The primary structure comprises 295 residues: UDP-N-acetylenolpyruvoylglucosamine reductase (295 aa).

Residues 24 to 188 (KVGGNAEIFF…LKAVFKINKG (165 aa)) enclose the FAD-binding PCMH-type domain. Residue Arg168 is part of the active site. The active-site Proton donor is Ser217. The active site involves Glu287.

This sequence belongs to the MurB family. FAD serves as cofactor.

The protein localises to the cytoplasm. It catalyses the reaction UDP-N-acetyl-alpha-D-muramate + NADP(+) = UDP-N-acetyl-3-O-(1-carboxyvinyl)-alpha-D-glucosamine + NADPH + H(+). It functions in the pathway cell wall biogenesis; peptidoglycan biosynthesis. In terms of biological role, cell wall formation. This is UDP-N-acetylenolpyruvoylglucosamine reductase from Rickettsia massiliae (strain Mtu5).